The primary structure comprises 543 residues: Chaperonin GroEL (543 aa).

Residues 29 to 32, 86 to 90, Gly413, 476 to 478, and Asp492 contribute to the ATP site; these read TLGP, DGTTT, and NAA.

This sequence belongs to the chaperonin (HSP60) family. As to quaternary structure, forms a cylinder of 14 subunits composed of two heptameric rings stacked back-to-back. Interacts with the co-chaperonin GroES.

It is found in the cytoplasm. It catalyses the reaction ATP + H2O + a folded polypeptide = ADP + phosphate + an unfolded polypeptide.. In terms of biological role, together with its co-chaperonin GroES, plays an essential role in assisting protein folding. The GroEL-GroES system forms a nano-cage that allows encapsulation of the non-native substrate proteins and provides a physical environment optimized to promote and accelerate protein folding. This Brevibacillus choshinensis protein is Chaperonin GroEL.